An 811-amino-acid chain; its full sequence is Beta-catenin homolog sys-1 (811 aa).

The tract at residues 1 to 105 (MHSTGEPQRG…SRGPAAPAQN (105 aa)) is disordered. The span at 64 to 103 (QQQQMTPQALSTQQQQQVQQQQQRQLYSSPSPSRGPAAPA) shows a compositional bias: low complexity.

In terms of assembly, interacts with TCF transcription factor pop-1 (via N-terminal region); interaction is direct.

The protein resides in the nucleus. The protein localises to the cytoplasm. It localises to the cytoplasmic granule. Its subcellular location is the cytoskeleton. It is found in the microtubule organizing center. The protein resides in the centrosome. The protein localises to the chromosome. It localises to the centromere. Its subcellular location is the kinetochore. Transcription coregulator. Part of the Wnt signaling asymmetry pathway, probably acting downstream of putative frizzled ligand mom-2, Wnt/frizzled receptors lin-17 and mom-5, and dishevelled homolog dsh-2. Activates or represses target gene expression, depending on upstream Wnt signals and interactions with transcription factors, such as pop-1. Required for the activation of Wnt-responsive genes in the E blastomere; thereby leading to a role in endoderm specification and gut development. Reciprocal distribution patterns of sys-1 and pop-1/TCF in the daughters of anterior-posterior cell divisions functions in specifying cell fate; a higher sys-1 to pop-1 ratio promotes the posterior cell fate, whereas a low sys-1 to pop-1 ratio promotes the anterior fate. Represses expression of homeobox ttx-3 in neuroblasts of the SIAD/SIBV lineage, perhaps acting by blocking its transcriptional activation by a complex consisting of ref-2 and pop-1. Required for early organization of the hermaphrodite, but not the male, gonad; involved in generation of regulatory cells, known as the distal tip cells (DTC), and in formation of the somatic gonadal primordium. Involved in regulating asymmetric divisions of the somatic gonadal precursor cells (SGP), Z1 and Z4. This is Beta-catenin homolog sys-1 from Caenorhabditis elegans.